The sequence spans 215 residues: 3-dehydroquinate dehydratase (215 aa).

3-dehydroquinate contacts are provided by residues S6, 31–33 (ELR), and R64. The active-site Proton donor/acceptor is the H111. Residue K138 is the Schiff-base intermediate with substrate of the active site. Positions 174, 193, and 197 each coordinate 3-dehydroquinate.

The protein belongs to the type-I 3-dehydroquinase family. As to quaternary structure, homodimer.

It catalyses the reaction 3-dehydroquinate = 3-dehydroshikimate + H2O. It participates in metabolic intermediate biosynthesis; chorismate biosynthesis; chorismate from D-erythrose 4-phosphate and phosphoenolpyruvate: step 3/7. Its function is as follows. Involved in the third step of the chorismate pathway, which leads to the biosynthesis of aromatic amino acids. Catalyzes the cis-dehydration of 3-dehydroquinate (DHQ) and introduces the first double bond of the aromatic ring to yield 3-dehydroshikimate. The sequence is that of 3-dehydroquinate dehydratase from Ignicoccus hospitalis (strain KIN4/I / DSM 18386 / JCM 14125).